The sequence spans 464 residues: ATP synthase subunit beta (464 aa).

148–155 serves as a coordination point for ATP; sequence GGAGVGKT.

The protein belongs to the ATPase alpha/beta chains family. F-type ATPases have 2 components, CF(1) - the catalytic core - and CF(0) - the membrane proton channel. CF(1) has five subunits: alpha(3), beta(3), gamma(1), delta(1), epsilon(1). CF(0) has three main subunits: a(1), b(2) and c(9-12). The alpha and beta chains form an alternating ring which encloses part of the gamma chain. CF(1) is attached to CF(0) by a central stalk formed by the gamma and epsilon chains, while a peripheral stalk is formed by the delta and b chains.

It localises to the cell inner membrane. The catalysed reaction is ATP + H2O + 4 H(+)(in) = ADP + phosphate + 5 H(+)(out). Produces ATP from ADP in the presence of a proton gradient across the membrane. The catalytic sites are hosted primarily by the beta subunits. The chain is ATP synthase subunit beta from Acinetobacter baumannii (strain AB0057).